The following is a 398-amino-acid chain: Neuroplastin (398 aa).

Residues 1-28 (MSGSSLPSALALSLLLVSGSLLPGPGAA) form the signal peptide. 3 Ig-like domains span residues 29-134 (QNAG…PSIT), 148-235 (PRIV…IEVK), and 238-329 (PDIT…SVVT). The Extracellular portion of the chain corresponds to 29-339 (QNAGFVKSPM…VLRVRSHLAP (311 aa)). Cys-52 and Cys-116 form a disulfide bridge. The narpin; mediates binding with FGFR1 and has antidepressant-like activity stretch occupies residues 149 to 161 (RIVTSEEVIIRDS). A disulfide bridge connects residues Cys-170 and Cys-218. Asn-171, Asn-197, Asn-229, Asn-284, Asn-296, and Asn-317 each carry an N-linked (GlcNAc...) asparagine glycan. A disulfide bridge links Cys-259 with Cys-316. The chain crosses the membrane as a helical span at residues 340-360 (LWPFLGILAEIIILVVIIVVY). Residues 361–398 (EKRKRPDEVPDDDEPAGPMKTNSTNNHKDKNLRQRNTN) are Cytoplasmic-facing. A disordered region spans residues 365–398 (RPDEVPDDDEPAGPMKTNSTNNHKDKNLRQRNTN).

As to quaternary structure, interacts with ATP2B1; this interaction stabilizes ATP2B1 and increases ATPase activity; this interaction controls T cell calcium homeostasis following T cell activation. Interacts with XKR8; promoting its localization at the cell membrane. Isoform 1 is ubiquitously expressed. Isoform 2 is expressed in brain cortex and cerebellum (at protein level).

It localises to the cell membrane. The protein localises to the postsynaptic density. Its function is as follows. Probable homophilic and heterophilic cell adhesion molecule involved in long term potentiation at hippocampal excitatory synapses through activation of p38MAPK. May also regulate neurite outgrowth by activating the FGFR1 signaling pathway. May play a role in synaptic plasticity. Also acts as a chaperone for ATP2B1; stabilizes ATP2B1 and increases its ATPase activity. Promotes localization of XKR8 at the cell membrane. The chain is Neuroplastin (NPTN) from Homo sapiens (Human).